Here is a 488-residue protein sequence, read N- to C-terminus: 3-octaprenyl-4-hydroxybenzoate carboxy-lyase (488 aa).

Asn172 provides a ligand contact to Mn(2+). Prenylated FMN-binding positions include 175–177, 189–191, and 194–195; these read IYR, RWL, and RG. Glu238 lines the Mn(2+) pocket. Catalysis depends on Asp287, which acts as the Proton donor.

This sequence belongs to the UbiD family. As to quaternary structure, homohexamer. Prenylated FMN is required as a cofactor. Requires Mn(2+) as cofactor.

Its subcellular location is the cell membrane. It carries out the reaction a 4-hydroxy-3-(all-trans-polyprenyl)benzoate + H(+) = a 2-(all-trans-polyprenyl)phenol + CO2. The protein operates within cofactor biosynthesis; ubiquinone biosynthesis. Catalyzes the decarboxylation of 3-octaprenyl-4-hydroxy benzoate to 2-octaprenylphenol, an intermediate step in ubiquinone biosynthesis. The chain is 3-octaprenyl-4-hydroxybenzoate carboxy-lyase from Azotobacter vinelandii (strain DJ / ATCC BAA-1303).